Consider the following 118-residue polypeptide: MRVKRAVHAKKKRKKFLKEAKGYRGALSRRYKLAKQMYIRSKWYSYVGRKIKKRDMRKLWITRINIAARNEGLKYSEFIHGLKLAGVSINRKMLSELAVNDPEAFKEYVRIAKEALAS.

Belongs to the bacterial ribosomal protein bL20 family.

Binds directly to 23S ribosomal RNA and is necessary for the in vitro assembly process of the 50S ribosomal subunit. It is not involved in the protein synthesizing functions of that subunit. This Thermotoga neapolitana (strain ATCC 49049 / DSM 4359 / NBRC 107923 / NS-E) protein is Large ribosomal subunit protein bL20.